Consider the following 1158-residue polypeptide: Transient receptor potential cation channel subfamily M member 5 (1158 aa).

Topologically, residues 1 to 729 (MQTTQSSCPG…LTRWRKFWGA (729 aa)) are cytoplasmic. Ser-129 is subject to Phosphoserine; by PKC. Cys-341, Asp-350, Asp-353, and Glu-354 together coordinate Ca(2+). The disordered stretch occupies residues 488-507 (GRRMEERGPPKRPAGQKWLP). The stretch at 552–572 (KIIKEMSHLEKEAEVARTMRE) forms a coiled coil. Residues 730–754 (PVTVFLGNVVMYFAFLFLFTYVLLV) form a helical membrane-spanning segment. The Extracellular segment spans residues 755 to 764 (DFRPPPQGPS). Residues 765–784 (GSEVTLYFWVFTLVLEEIRQ) form a helical membrane-spanning segment. Ca(2+)-binding residues include Glu-781 and Gln-784. Residues 785 to 805 (GFFTDEDTHLVKKFTLYVEDN) lie on the Cytoplasmic side of the membrane. The chain crosses the membrane as a helical span at residues 806–824 (WNKCDMVAIFLFIVGVTCR). Ca(2+) contacts are provided by Asn-807 and Asp-810. The Extracellular segment spans residues 825–831 (MVPSVFE). Residues 832 to 854 (AGRTVLAIDFMVFTLRLIHIFAI) form a helical membrane-spanning segment. Over 855-863 (HKQLGPKII) the chain is Cytoplasmic. Residues 864 to 893 (IVERMMKDVFFFLFFLSVWLVAYGVTTQAL) form a helical membrane-spanning segment. Residues 894–902 (LHPHDGRLE) lie on the Extracellular side of the membrane. An intramembrane region (pore-forming) is located at residues 903-938 (WIFRRVLYRPYLQIFGQIPLDEIDEARVNCSLHPLL). The short motif at 917–919 (FGQ) is the Selectivity filter element. The Extracellular segment spans residues 939–950 (LESSASCPNLYA). Residues 951–985 (NWLVILLLVTFLLVTNVLLMNLLIAMFSYTFQVVQ) form a helical membrane-spanning segment. Topologically, residues 986-1158 (GNADMFWKFQ…LESGLPPSDT (173 aa)) are cytoplasmic. Glu-1002 lines the Ca(2+) pocket. Positions 1127–1141 (TYSSSQNCGCRSQPA) are enriched in polar residues. The disordered stretch occupies residues 1127-1158 (TYSSSQNCGCRSQPASARDREYLESGLPPSDT).

It belongs to the transient receptor (TC 1.A.4) family. LTrpC subfamily. TRPM5 sub-subfamily. As to quaternary structure, homotetramer. Multiple phosphorylation sites regulate the Gq/ TRPM5 modulation axis, with the Ser-129 playing a substantial role in this positive modulation. Strongly expressed in liver, heart, testis, brain and kidney. Detected in fetal liver, kidney, spleen, brain, heart and lung, and in adult skin, eyes, spleen, stomach, small intestine, colon, lung, bladder, pancreas and thymus. Biallelically expressed at all stages and tissues examined. Also expressed in subsets of taste receptor cells of the tongue, in olfactory sensory neurons of the main olfactory epithelium and in the vomeronasal organ.

The protein localises to the cell membrane. It carries out the reaction Na(+)(in) = Na(+)(out). It catalyses the reaction K(+)(in) = K(+)(out). With respect to regulation, ca(2+)-activated cation channel. Displays voltage dependence modulation. Regulated by PI(4,5)P2 levels. PI(4,5)P 2 reverses the Ca(2+) -induced desensitization of channels. Inhibited by flufenamic acid with an IC(50) of 24.5 uM and spermine with an IC(50) of 37 uM. Is a highly temperature-sensitive, heat activated channel showing a steep increase of inward currents at temperatures between 15 and 35 degrees Celsius. Heat activation is due to a shift of the voltage-dependent activation curve to negative potentials. The channel is blocked by extracellular acidification. In terms of biological role, monovalent cation-selective ion channel activated by intracellular Ca(2+) in a voltage- and temperature-dependent manner. Mediates the transport of Na(+), K(+) and Cs(+) ions equally well. Activated directly by increase in intracellular Ca(2+), but is impermeable to it. The activation mechanism of TRPM5 involves a multistep process. TRPM5 activation involves ligand binding (i.e., tastant molecule, glucose stimulation) to Gq/G-protein coupled receptors (GPCR) and leads to the breakdown of phosphatidylinositol bisphosphate (PIP2) into diacylglycerol (DAG) and inositol trisphosphate (IP3), IP3 binds to its receptors in the endoplasmic reticulum and cause Ca(2+) release. Simultaneously with the intracellular Ca(2+) release, DAG activates the protein kinase C (PKC), which phosphorylates the TRPM5 channel. This phosphorylation combined with the bound Ca(2+), leads to a robust inward current allowing the entry of sodium ions (Na+) into the cell. This ion influx depolarizes the cell membrane, generating action potentials that propagate TRPM5 signals. Is a key player in sensing sweet, umami and bitter stimuli. May also be involved in sensing semiochemicals. Involved in insulin secretion by pancreatic beta cells. In Mus musculus (Mouse), this protein is Transient receptor potential cation channel subfamily M member 5.